The chain runs to 65 residues: Sarcoplasmic/endoplasmic reticulum calcium ATPase regulator ARLN (65 aa).

Methionine 1 bears the N-acetylmethionine mark. The interval 1-38 is disordered; the sequence is MEVGQAASGTDGVRERRGSSAARRRSQDEPVQSGMNGI. Phosphoserine is present on residues serine 19 and serine 26. A helical transmembrane segment spans residues 44-64; sequence WLDLWLFILFDLALFIFVYLL.

As to quaternary structure, homooligomer. Can also form heterooligomers with other sarcoplasmic/endoplasmic reticulum calcium ATPase (SERCA) regulators ERLN, PLN, SLN and STRIT1/DWORF. Monomer. Interacts as a monomer with ATP2A2/SERCA2; the interaction results in inhibition of ATP2A2 Ca(2+) affinity.

It localises to the endoplasmic reticulum membrane. Inhibits the activity of the calcium ATPases ATP2A2/SERCA2 and ATP2A3/SERCA3 by decreasing their apparent affinity for Ca(2+). The sequence is that of Sarcoplasmic/endoplasmic reticulum calcium ATPase regulator ARLN (Arln) from Rattus norvegicus (Rat).